The sequence spans 1568 residues: Myosin-2 (1568 aa).

The Myosin N-terminal SH3-like domain maps to 4–57 (EVGTRCWYPHKELGWIGAEVIKNEVKDGKYHLELSLEDDEVVSVDTEDLNDDKN). Residues 70–783 (EATEDLTSLS…MLAYLEKLRS (714 aa)) enclose the Myosin motor domain. 164–171 (GESGAGKT) is an ATP binding site. Residues 443–523 (FIGVLDIYGF…LGILSLLDEE (81 aa)) are actin-binding. Positions 619-641 (KKAELEQNNPGNKKPGPARTVNR) are disordered. 6 consecutive IQ domains span residues 786 to 808 (MHNS…QYLK), 809 to 833 (ISQA…YHEM), 834 to 856 (KVHS…NVFN), 857 to 881 (VLIT…KREH), 882 to 904 (EYNA…TFLN), and 905 to 934 (TKRD…DAKS). Positions 944–1088 (KLENKVIELT…ISRLQTAMSL (145 aa)) form a coiled coil. A non alpha-helical, tail domain region spans residues 1089 to 1568 (GTVTTSVLPQ…VAQQVVQDGH (480 aa)). Positions 1223 to 1498 (AQVLTTIQKV…LRYVADIVKK (276 aa)) constitute a Dilute domain.

The protein belongs to the TRAFAC class myosin-kinesin ATPase superfamily. Myosin family. As to quaternary structure, homodimer. Interacts with calmodulin (CMD1) and the myosin light chain MLC1 through its IQ repeats.

Myosin heavy chain that is required for the cell cycle-regulated transport of various organelles and proteins for their segregation. Functions by binding with its tail domain to receptor proteins on organelles and exerting force with its N-terminal motor domain against actin filaments, thereby transporting its cargo along polarized actin cables. In Saccharomyces uvarum (strain ATCC 76518 / CBS 7001 / CLIB 283 / NBRC 10550 / MCYC 623 / NCYC 2669 / NRRL Y-11845) (Yeast), this protein is Myosin-2 (MYO2).